We begin with the raw amino-acid sequence, 316 residues long: Erythritol catabolism regulatory protein EryD (316 aa).

A DNA-binding region (H-T-H motif) is located at residues 23–42 (QSAVAKRLGLPSVKAHRLIA).

It belongs to the SorC transcriptional regulatory family.

Erythritol may act as an inducer, probably by binding to EryD and inhibiting its repressor activity. Functionally, represses the expression of the eryABCD operon, which is involved in erythritol catabolism. The sequence is that of Erythritol catabolism regulatory protein EryD from Brucella abortus (strain 2308).